The chain runs to 708 residues: O-antigen chain terminator bifunctional methyltransferase/kinase WbdD (708 aa).

A methyltransferase region spans residues 1-210 (MTKDLNTLVS…VPRPMYLVSN (210 aa)). Residues 16–17 (YQ), Arg-36, Gly-61, 82–87 (DFQQEN), 108–111 (GRIE), and Leu-128 each bind S-adenosyl-L-methionine. Residues 211–459 (HRVLINDFNQ…AKLPSAEQQR (249 aa)) form a kinase region. Residues Pro-229, His-237, 241 to 243 (RRY), Lys-252, Glu-274, 309 to 311 (EKL), Met-358, and Asp-369 each bind ATP. Positions 485 to 594 (AGSEALRGQI…EIEKIHRSRS (110 aa)) form a coiled coil. Residues 601–669 (YRYLGLQIHL…RLYRRMNPLP (69 aa)) are required for membrane-binding. The interval 687–708 (VMHPELLPPEVYEIYLKLTKNK) is required for localizing WbdA to the membrane.

Belongs to the WbdD family. Homotrimer in solution. Interacts with WbdA.

The protein resides in the cell inner membrane. The enzyme catalyses 3-O-phospho-alpha-D-Man-(1-&gt;2)-alpha-D-Man-(1-&gt;2)-[alpha-D-Man-(1-&gt;3)-alpha-D-Man-(1-&gt;3)-alpha-D-Man-(1-&gt;2)-alpha-D-Man-(1-&gt;2)](n)-alpha-D-Man-(1-&gt;3)-alpha-D-Man-(1-&gt;3)-alpha-D-Man-(1-&gt;3)-alpha-D-GlcNAc-di-trans,octa-cis-undecaprenyl diphosphate + S-adenosyl-L-methionine = 3-O-methylphospho-alpha-D-Man-(1-&gt;2)-alpha-D-Man-(1-&gt;2)-[alpha-D-Man-(1-&gt;3)-alpha-D-Man-(1-&gt;3)-alpha-D-Man-(1-&gt;2)-alpha-D-Man-(1-&gt;2)](n)-alpha-D-Man-(1-&gt;3)-alpha-D-Man-(1-&gt;3)-alpha-D-Man-(1-&gt;3)-alpha-D-GlcNAc-di-trans,octa-cis-undecaprenyl diphosphate + S-adenosyl-L-homocysteine. The catalysed reaction is alpha-D-Man-(1-&gt;2)-alpha-D-Man-(1-&gt;2)-[alpha-D-Man-(1-&gt;3)-alpha-D-Man-(1-&gt;3)-alpha-D-Man-(1-&gt;2)-alpha-D-Man-(1-&gt;2)](n)-alpha-D-Man-(1-&gt;3)-alpha-D-Man-(1-&gt;3)-alpha-D-Man-(1-&gt;3)-alpha-D-GlcNAc-di-trans,octa-cis-undecaprenyl diphosphate + ATP = 3-O-phospho-alpha-D-Man-(1-&gt;2)-alpha-D-Man-(1-&gt;2)-[alpha-D-Man-(1-&gt;3)-alpha-D-Man-(1-&gt;3)-alpha-D-Man-(1-&gt;2)-alpha-D-Man-(1-&gt;2)](n)-alpha-D-Man-(1-&gt;3)-alpha-D-Man-(1-&gt;3)-alpha-D-Man-(1-&gt;3)-alpha-D-GlcNAc-di-trans,octa-cis-undecaprenyl diphosphate + ADP + H(+). Its pathway is bacterial outer membrane biogenesis; LPS O-antigen biosynthesis. In terms of biological role, regulates the length of the LPS O-antigen polysaccharide chain. Stops the polymerization of the chain by phosphorylating and then methylating the phosphate on the terminal sugar. This terminal modification is essential for export of the O-antigen across the inner membrane. WbdD is also required for correct localization of the WbdA mannosyltransferase. The chain is O-antigen chain terminator bifunctional methyltransferase/kinase WbdD from Escherichia coli.